Consider the following 288-residue polypeptide: Solute carrier family 25 member 45 (288 aa).

3 Solcar repeats span residues 1–83, 97–191, and 199–286; these read MPVE…TLLA, PSYT…LCRQ, and PSSA…LLRL. Helical transmembrane passes span 6–26, 58–78, 102–122, 166–186, 202–222, and 266–286; these read FVAGWISGAVGLVLGHPFDTV, GMSFPIASVALVNSVLFGVYS, IFIAGCTGGLLQAYCLAPFDL, GSWALVLRDTPTLGMYFVTYE, ATVLVAGGFAGIASWITATPF, and SARAFPVNAATFLSYEYLLRL.

This sequence belongs to the mitochondrial carrier (TC 2.A.29) family. In terms of tissue distribution, widely expressed, with highest levels in testis, liver and kidney and low levels in brain, including cortex, cerebellum, hippocampus and hypothalamus, and heart.

Its subcellular location is the mitochondrion inner membrane. This is Solute carrier family 25 member 45 (Slc25a45) from Mus musculus (Mouse).